The chain runs to 148 residues: 1,4-dihydroxy-2-naphthoyl-CoA hydrolase (148 aa).

The active site involves aspartate 15.

Belongs to the 4-hydroxybenzoyl-CoA thioesterase family. DHNA-CoA hydrolase subfamily.

The catalysed reaction is 1,4-dihydroxy-2-naphthoyl-CoA + H2O = 1,4-dihydroxy-2-naphthoate + CoA + H(+). It functions in the pathway cofactor biosynthesis; phylloquinone biosynthesis. The protein operates within quinol/quinone metabolism; 1,4-dihydroxy-2-naphthoate biosynthesis; 1,4-dihydroxy-2-naphthoate from chorismate: step 7/7. Catalyzes the hydrolysis of 1,4-dihydroxy-2-naphthoyl-CoA (DHNA-CoA) to 1,4-dihydroxy-2-naphthoate (DHNA), a reaction involved in phylloquinone (vitamin K1) biosynthesis. This is 1,4-dihydroxy-2-naphthoyl-CoA hydrolase from Nostoc punctiforme (strain ATCC 29133 / PCC 73102).